We begin with the raw amino-acid sequence, 196 residues long: C-type lectin domain family 2 member F (196 aa).

Residues 1–21 (MNAQCLKKPEEGESSPGTGDK) are disordered. Residues 1-41 (MNAQCLKKPEEGESSPGTGDKILQRNSLRAISPESSAKLYC) are Cytoplasmic-facing. The helical; Signal-anchor for type II membrane protein transmembrane segment at 42–62 (CCGVIMVLTVAVVALSVALPA) threads the bilayer. Over 63–196 (TKTEQILINK…SRSSNYMLQC (134 aa)) the chain is Extracellular. A disulfide bond links Cys-77 and Cys-88. Residues 84–187 (VGNKCFYFSE…DYIPRKWICS (104 aa)) enclose the C-type lectin domain. N-linked (GlcNAc...) asparagine glycosylation is present at Asn-97. Cys-105 and Cys-186 are joined by a disulfide.

It is found in the cell membrane. In terms of biological role, lectin-type cell surface receptor. The chain is C-type lectin domain family 2 member F (Clec2f) from Mus musculus (Mouse).